The sequence spans 391 residues: Homoserine O-acetyltransferase (391 aa).

Positions 50–360 (NAILICHALT…DKGHDAFLLD (311 aa)) constitute an AB hydrolase-1 domain. The active-site Nucleophile is S155. R225 serves as a coordination point for substrate. Residues D321 and H354 contribute to the active site. Residue D355 participates in substrate binding.

The protein belongs to the AB hydrolase superfamily. MetX family. In terms of assembly, homodimer.

It is found in the cytoplasm. It carries out the reaction L-homoserine + acetyl-CoA = O-acetyl-L-homoserine + CoA. It functions in the pathway amino-acid biosynthesis; L-methionine biosynthesis via de novo pathway; O-acetyl-L-homoserine from L-homoserine: step 1/1. Functionally, transfers an acetyl group from acetyl-CoA to L-homoserine, forming acetyl-L-homoserine. The chain is Homoserine O-acetyltransferase from Rhodospirillum rubrum (strain ATCC 11170 / ATH 1.1.1 / DSM 467 / LMG 4362 / NCIMB 8255 / S1).